Consider the following 1442-residue polypeptide: DNA polymerase III PolC-type (1442 aa).

One can recognise an Exonuclease domain in the interval 409-568 (YVIFDIETTG…YDAIVLADVF (160 aa)).

Belongs to the DNA polymerase type-C family. PolC subfamily.

The protein resides in the cytoplasm. The catalysed reaction is DNA(n) + a 2'-deoxyribonucleoside 5'-triphosphate = DNA(n+1) + diphosphate. In terms of biological role, required for replicative DNA synthesis. This DNA polymerase also exhibits 3' to 5' exonuclease activity. The chain is DNA polymerase III PolC-type from Ureaplasma parvum serovar 3 (strain ATCC 700970).